A 201-amino-acid polypeptide reads, in one-letter code: NADH-quinone oxidoreductase subunit C (201 aa).

This sequence belongs to the complex I 30 kDa subunit family. In terms of assembly, NDH-1 is composed of 14 different subunits. Subunits NuoB, C, D, E, F, and G constitute the peripheral sector of the complex.

It is found in the cell inner membrane. The catalysed reaction is a quinone + NADH + 5 H(+)(in) = a quinol + NAD(+) + 4 H(+)(out). In terms of biological role, NDH-1 shuttles electrons from NADH, via FMN and iron-sulfur (Fe-S) centers, to quinones in the respiratory chain. The immediate electron acceptor for the enzyme in this species is believed to be ubiquinone. Couples the redox reaction to proton translocation (for every two electrons transferred, four hydrogen ions are translocated across the cytoplasmic membrane), and thus conserves the redox energy in a proton gradient. The chain is NADH-quinone oxidoreductase subunit C from Aromatoleum aromaticum (strain DSM 19018 / LMG 30748 / EbN1) (Azoarcus sp. (strain EbN1)).